A 364-amino-acid chain; its full sequence is Aminomethyltransferase (364 aa).

The protein belongs to the GcvT family. As to quaternary structure, the glycine cleavage system is composed of four proteins: P, T, L and H.

It catalyses the reaction N(6)-[(R)-S(8)-aminomethyldihydrolipoyl]-L-lysyl-[protein] + (6S)-5,6,7,8-tetrahydrofolate = N(6)-[(R)-dihydrolipoyl]-L-lysyl-[protein] + (6R)-5,10-methylene-5,6,7,8-tetrahydrofolate + NH4(+). The glycine cleavage system catalyzes the degradation of glycine. The polypeptide is Aminomethyltransferase (Thermotoga petrophila (strain ATCC BAA-488 / DSM 13995 / JCM 10881 / RKU-1)).